The primary structure comprises 355 residues: Protein ATP1B4 (355 aa).

At 1-108 the chain is on the nuclear side; sequence MRRQLRSRRA…SLARTGQSLS (108 aa). The disordered stretch occupies residues 35-76; that stretch reads EEEEAEEARVMVVPDLEEEEKEEEEEKEEDEKEEEESHHQDT. The segment covering 49–68 has biased composition (acidic residues); sequence DLEEEEKEEEEEKEEDEKEE. The helical; Signal-anchor for type II membrane protein transmembrane segment at 109–129 threads the bilayer; it reads LLLVIYFFFYASLAAVITLCM. Residues 130–355 are Perinuclear space-facing; it reads YTLFLTISPY…RVIFTLNIET (226 aa).

The protein belongs to the X(+)/potassium ATPases subunit beta family. In terms of assembly, associates with a SMAD7-transcriptional complex. Interacts with SNW1 and TOR1AIP1. Does not associate with known Na,K-ATPase alpha-subunits. As to expression, expressed in skeletal muscle (at protein level). Expressed during postnatal development in skeletal muscle and heart.

Its subcellular location is the nucleus inner membrane. In terms of biological role, may act as a transcriptional coregulator during muscle development through its interaction with SNW1. Has lost its ancestral function as a Na,K-ATPase beta-subunit. The chain is Protein ATP1B4 (ATP1B4) from Sus scrofa (Pig).